The chain runs to 395 residues: Dihydroorotate dehydrogenase (quinone), mitochondrial (395 aa).

A mitochondrion; not cleaved-targeting transit peptide spans 1-10 (MAWRHLKKRA). Over 1-10 (MAWRHLKKRA) the chain is Mitochondrial matrix. Residues 11-30 (QDAVIILGGGGLLFASYLMA) traverse the membrane as a helical segment. Topologically, residues 31–395 (TGDERFYAEH…TDAIGADHRR (365 aa)) are mitochondrial intermembrane. FMN contacts are provided by residues 95–99 (AGFDK) and Ser119. Lys99 lines the substrate pocket. Residue 144–148 (NRYGF) coordinates substrate. Asn180 and Asn211 together coordinate FMN. 211–216 (NVSSPN) lines the substrate pocket. The active-site Nucleophile is the Ser214. 2 residues coordinate FMN: Lys254 and Thr282. 283–284 (NT) contacts substrate. Residues Gly305, Gly334, and 355 to 356 (YT) contribute to the FMN site.

This sequence belongs to the dihydroorotate dehydrogenase family. Type 2 subfamily. In terms of assembly, monomer. FMN serves as cofactor. In terms of processing, the uncleaved transit peptide is required for mitochondrial targeting and proper membrane integration.

The protein localises to the mitochondrion inner membrane. It catalyses the reaction (S)-dihydroorotate + a quinone = orotate + a quinol. It participates in pyrimidine metabolism; UMP biosynthesis via de novo pathway; orotate from (S)-dihydroorotate (quinone route): step 1/1. Functionally, catalyzes the conversion of dihydroorotate to orotate with quinone as electron acceptor. Required for UMP biosynthesis via de novo pathway. This is Dihydroorotate dehydrogenase (quinone), mitochondrial (DHODH) from Homo sapiens (Human).